The following is a 71-amino-acid chain: Non-disulfide-bridged peptide 5.5 (71 aa).

The first 23 residues, 1-23, serve as a signal peptide directing secretion; sequence MKTQFIVLIVAIVFLQLLSQSEA. Leucine amide is present on L36. Residues 40-71 constitute a propeptide that is removed on maturation; that stretch reads DLRHLDLDQFDDMFDQPEISAADMKFLQDLLR.

Belongs to the non-disulfide-bridged peptide (NDBP) superfamily. Short antimicrobial peptide (group 4) family. In terms of tissue distribution, expressed by the venom gland.

The protein resides in the secreted. Its subcellular location is the target cell membrane. Antimicrobial peptide. Is active on Mycobacterium abscessus subsp. massiliense (MBC=200 uM), a rapidly growing and emerging pathogen associated with healthcare infections. Also shows antifungal activities. Has a weak hemolytic activity on human erythrocytes (10% at 610 uM), indicating a low toxicity (therapeutic index (TI)=3.05). In addition, treatment of infected macrophages reduces the bacterial load. In vivo, treatment of M.abscessus-infected mice causes a decrease in the bacterial load in the lungs and liver. The polypeptide is Non-disulfide-bridged peptide 5.5 (Hoffmannihadrurus gertschi (Scorpion)).